Reading from the N-terminus, the 1084-residue chain is MSSNSFAYNEQSGGGEATELGQEATSTISPSGAFGLFSSDMKKNEDLKQMLESNKDSAKLDAMKRIVGMIAKGKNASELFPAVVKNVASKNIEIKKLVYVYLVRYAEEQQDLALLSISTFQRALKDPNQLIRASALRVLSSIRVPIIVPIMMLAIKEASADLSPYVRKNAAHAIQKLYSLDPEQKEMLIEIIEKLLKDKSTLVAGSVVMAFEEVCPDRIDLIHKNYRKLCNLLVDVEEWGQVVIIHMLTRYARTQFVSPWRQGDVLEDNEKDFYDSDEEQKEKADKRKRPYAMDPDHRLLIRNTKPLLQSRNAAVVMAVAQLYWHIAPKSEAGIISKSLVRLLRSSREVQYIVLQNIATMSIQRKGMFEPYLKSFYVRSTDATMIKILKLEILTNLANEANISTLLREFQTYVKSQDKQFAAATIQTIGRCATSITEVSDTCLNGLVCLLSNRDEIVVAESVVVIKKLLQMQPMQHGEIIKHMAKLLDSITVPVARASILWLIGENCERVPKIAPDVLRKTAKSFTSEDDLVKLQILNLGAKLYLTNSKQTKLLTQYILNLGKYDQNYDIRDRTRFIRQLIVPNEKSGALSKYAKKIFLAQKPAPLLESPFKDRDHFQLGTLSHTLNTKATGYLELSNWPEVAPDPSVRNVEVIELAKEWTPAGKAKKENPDKKFYSESEEEEDSSESSSDSESESGSESGEDEEDDRSGDSAEDSGESGSEPEAGKGRAATRSRARGRGDSKDVDKEKENSKTSESSSGESSSIEESSSDSESESESESESESRKVTKEKEKKTKQERNPLTKDVSLLDLDDFNLVSTPVALPTPALSPSLIADLEGLNLSATSSVISVSTPVFVPGKTHVLLHRMSGKGLAAHYFFPRQPCIFGDKMVSVQITLNNTTDQKIENIHVGGKKLPMGMQMHVFNPIESLEPAGSITVSMGIDFCDSTQTASFQLCTKDDCFSVNIQPPVGELLLPVAMSEKDFKKEQGMLSGMNETSTTIIAAPQNFASSVILQKIVNVANVGVVPSGQDNIHRFAAKTVHSGSLMLVTVELKEGSTAQLIINTEKTVIGSVLLRELKPVLSQG.

Polar residues predominate over residues 1–11 (MSSNSFAYNEQ). Positions 1–26 (MSSNSFAYNEQSGGGEATELGQEATS) are disordered. Residues Ser276 and Ser609 each carry the phosphoserine modification. The disordered stretch occupies residues 663 to 800 (AGKAKKENPD…KEKKTKQERN (138 aa)). Positions 666-677 (AKKENPDKKFYS) are enriched in basic and acidic residues. Residues 678–717 (ESEEEEDSSESSSDSESESGSESGEDEEDDRSGDSAEDSG) show a composition bias toward acidic residues. Low complexity predominate over residues 718–729 (ESGSEPEAGKGR). Residues 738 to 753 (GRGDSKDVDKEKENSK) show a composition bias toward basic and acidic residues. Residue Ser742 is modified to Phosphoserine. Positions 754 to 767 (TSESSSGESSSIEE) are enriched in low complexity. Residues 768–781 (SSSDSESESESESE) show a composition bias toward acidic residues. Over residues 782 to 800 (SESRKVTKEKEKKTKQERN) the composition is skewed to basic and acidic residues.

Belongs to the adaptor complexes large subunit family. As to quaternary structure, adaptor protein complex 3 (AP-3) is a heterotetramer composed of two large adaptins (delta-type subunit AP3D1 and beta-type subunit AP3B1 or AP3B2), a medium adaptin (mu-type subunit AP3M1 or AP3M2) and a small adaptin (sigma-type subunit APS1 or AP3S2). AP-3 associates with the BLOC-1 complex. Interacts with KIF3A; interaction is direct; interaction is impaired by pyrophosphorylation of AP3B1. Post-translationally, phosphorylated on serine residues. Pyrophosphorylation by 5-diphosphoinositol pentakisphosphate (5-IP7) impairs interaction with KIF3A. Serine pyrophosphorylation is achieved by Mg(2+)-dependent, but enzyme independent transfer of a beta-phosphate from a inositol pyrophosphate to a pre-phosphorylated serine residue.

It localises to the cytoplasmic vesicle. The protein resides in the clathrin-coated vesicle membrane. Its subcellular location is the golgi apparatus. Functionally, subunit of non-clathrin- and clathrin-associated adaptor protein complex 3 (AP-3) that plays a role in protein sorting in the late-Golgi/trans-Golgi network (TGN) and/or endosomes. The AP complexes mediate both the recruitment of clathrin to membranes and the recognition of sorting signals within the cytosolic tails of transmembrane cargo molecules. AP-3 appears to be involved in the sorting of a subset of transmembrane proteins targeted to lysosomes and lysosome-related organelles. In concert with the BLOC-1 complex, AP-3 is required to target cargos into vesicles assembled at cell bodies for delivery into neurites and nerve terminals. In Bos taurus (Bovine), this protein is AP-3 complex subunit beta-1 (AP3B1).